The chain runs to 312 residues: Aspartate carbamoyltransferase catalytic subunit (312 aa).

Residues R57 and T58 each coordinate carbamoyl phosphate. K85 contacts L-aspartate. Residues R107, H135, and Q138 each contribute to the carbamoyl phosphate site. Residues R168 and R222 each contribute to the L-aspartate site. Carbamoyl phosphate contacts are provided by G264 and P265.

This sequence belongs to the aspartate/ornithine carbamoyltransferase superfamily. ATCase family. In terms of assembly, heterododecamer (2C3:3R2) of six catalytic PyrB chains organized as two trimers (C3), and six regulatory PyrI chains organized as three dimers (R2).

It carries out the reaction carbamoyl phosphate + L-aspartate = N-carbamoyl-L-aspartate + phosphate + H(+). Its pathway is pyrimidine metabolism; UMP biosynthesis via de novo pathway; (S)-dihydroorotate from bicarbonate: step 2/3. Its function is as follows. Catalyzes the condensation of carbamoyl phosphate and aspartate to form carbamoyl aspartate and inorganic phosphate, the committed step in the de novo pyrimidine nucleotide biosynthesis pathway. The polypeptide is Aspartate carbamoyltransferase catalytic subunit (Carboxydothermus hydrogenoformans (strain ATCC BAA-161 / DSM 6008 / Z-2901)).